Consider the following 324-residue polypeptide: Corticotropin-releasing factor-binding protein (324 aa).

The signal sequence occupies residues 1–23; that stretch reads MAPTLKLQCHFILVCLLALRGES. 5 cysteine pairs are disulfide-bonded: Cys62/Cys83, Cys106/Cys143, Cys185/Cys207, Cys239/Cys266, and Cys279/Cys320. Asn206 carries N-linked (GlcNAc...) asparagine glycosylation.

It belongs to the CRF-binding protein family.

The protein localises to the secreted. Its function is as follows. Binds CRF and inactivates it. May prevent inappropriate pituitary-adrenal stimulation in pregnancy. This is Corticotropin-releasing factor-binding protein (CRHBP) from Ovis aries (Sheep).